The following is a 57-amino-acid chain: Large ribosomal subunit protein bL32 (57 aa).

The segment at methionine 1–histidine 38 is disordered.

This sequence belongs to the bacterial ribosomal protein bL32 family.

The protein is Large ribosomal subunit protein bL32 of Escherichia coli O7:K1 (strain IAI39 / ExPEC).